Reading from the N-terminus, the 663-residue chain is UvrABC system protein B (663 aa).

One can recognise a Helicase ATP-binding domain in the interval 31–271 (DNIESGEKAQ…EQSISKIQAE (241 aa)). 44 to 51 (GATGTGKT) provides a ligand contact to ATP. The short motif at 97–120 (YYDYYQPEAYVPSSDTYIEKDSSV) is the Beta-hairpin element. Residues 435-601 (QMDDLLGEIN…TIKKDIRDLI (167 aa)) form the Helicase C-terminal domain. Positions 627–662 (QEAIKQLQKNMQEAAELLDFELAAQLRDLILELKAI) constitute a UVR domain.

Belongs to the UvrB family. In terms of assembly, forms a heterotetramer with UvrA during the search for lesions. Interacts with UvrC in an incision complex.

It localises to the cytoplasm. In terms of biological role, the UvrABC repair system catalyzes the recognition and processing of DNA lesions. A damage recognition complex composed of 2 UvrA and 2 UvrB subunits scans DNA for abnormalities. Upon binding of the UvrA(2)B(2) complex to a putative damaged site, the DNA wraps around one UvrB monomer. DNA wrap is dependent on ATP binding by UvrB and probably causes local melting of the DNA helix, facilitating insertion of UvrB beta-hairpin between the DNA strands. Then UvrB probes one DNA strand for the presence of a lesion. If a lesion is found the UvrA subunits dissociate and the UvrB-DNA preincision complex is formed. This complex is subsequently bound by UvrC and the second UvrB is released. If no lesion is found, the DNA wraps around the other UvrB subunit that will check the other stand for damage. In Streptococcus equi subsp. zooepidemicus (strain MGCS10565), this protein is UvrABC system protein B.